The chain runs to 68 residues: Riparin-1.5 amide (68 aa).

The first 15 residues, 1–15 (MKIIVVLAVLMLVSA), serve as a signal peptide directing secretion. A propeptide spanning residues 16-41 (QVCLVSAAEMGHSSDNELSSRDLVKR) is cleaved from the precursor. Cys47 and Cys53 are oxidised to a cystine. At Cys53 the chain carries Cysteine amide. Residues 57–68 (SIESSEGANGGE) constitute a propeptide that is removed on maturation.

Expressed by the skin glands.

It localises to the secreted. This Crinia riparia (Streambank froglet) protein is Riparin-1.5 amide.